We begin with the raw amino-acid sequence, 432 residues long: Tol-Pal system protein TolB (432 aa).

Residues 1–22 (MMFKKCLSVLFTCLIFISSARA) form the signal peptide.

It belongs to the TolB family. The Tol-Pal system is composed of five core proteins: the inner membrane proteins TolA, TolQ and TolR, the periplasmic protein TolB and the outer membrane protein Pal. They form a network linking the inner and outer membranes and the peptidoglycan layer.

The protein localises to the periplasm. Its function is as follows. Part of the Tol-Pal system, which plays a role in outer membrane invagination during cell division and is important for maintaining outer membrane integrity. This Marinomonas sp. (strain MWYL1) protein is Tol-Pal system protein TolB.